Reading from the N-terminus, the 238-residue chain is Ditrans,polycis-undecaprenyl-diphosphate synthase ((2E,6E)-farnesyl-diphosphate specific) (238 aa).

Residue D14 is part of the active site. D14 is a Mg(2+) binding site. Residues 15–18, W19, R27, H31, and 59–61 contribute to the substrate site; these read GNGR and SSE. Catalysis depends on N62, which acts as the Proton acceptor. Substrate-binding positions include W63, R65, R182, and 188 to 190; that span reads RIS. E201 contributes to the Mg(2+) binding site.

The protein belongs to the UPP synthase family. As to quaternary structure, homodimer. Requires Mg(2+) as cofactor.

It carries out the reaction 8 isopentenyl diphosphate + (2E,6E)-farnesyl diphosphate = di-trans,octa-cis-undecaprenyl diphosphate + 8 diphosphate. Functionally, catalyzes the sequential condensation of isopentenyl diphosphate (IPP) with (2E,6E)-farnesyl diphosphate (E,E-FPP) to yield (2Z,6Z,10Z,14Z,18Z,22Z,26Z,30Z,34E,38E)-undecaprenyl diphosphate (di-trans,octa-cis-UPP). UPP is the precursor of glycosyl carrier lipid in the biosynthesis of bacterial cell wall polysaccharide components such as peptidoglycan and lipopolysaccharide. This is Ditrans,polycis-undecaprenyl-diphosphate synthase ((2E,6E)-farnesyl-diphosphate specific) from Legionella pneumophila subsp. pneumophila (strain Philadelphia 1 / ATCC 33152 / DSM 7513).